A 216-amino-acid chain; its full sequence is Maleylacetoacetate isomerase (216 aa).

Position 1 is an N-acetylmethionine (Met-1). The GST N-terminal domain occupies 4-87 (GKPVLYSYFR…YLEETRPIPR (84 aa)). Glutathione is bound by residues 14 to 19 (SSCSWR) and Gln-45. Lys-57 carries the N6-succinyllysine modification. Glutathione contacts are provided by residues Val-59, 71 to 72 (QS), Gln-111, and 115 to 117 (NLS). The GST C-terminal domain maps to 92 to 212 (DPQKRAIVRM…HPCRQPDTPA (121 aa)). Phosphothreonine is present on Thr-136. Ser-137 bears the Phosphoserine mark. Lys-177 bears the N6-succinyllysine mark. Ser-181 carries the post-translational modification Phosphoserine.

This sequence belongs to the GST superfamily. Zeta family. In terms of assembly, homodimer. Glutathione serves as cofactor. Post-translationally, the N-terminus is blocked.

It is found in the cytoplasm. It catalyses the reaction 4-maleylacetoacetate = 4-fumarylacetoacetate. It carries out the reaction RX + glutathione = an S-substituted glutathione + a halide anion + H(+). It functions in the pathway amino-acid degradation; L-phenylalanine degradation; acetoacetate and fumarate from L-phenylalanine: step 5/6. In terms of biological role, probable bifunctional enzyme showing minimal glutathione-conjugating activity with ethacrynic acid and 7-chloro-4-nitrobenz-2-oxa-1, 3-diazole and maleylacetoacetate isomerase activity. Also has low glutathione peroxidase activity with t-butyl and cumene hydroperoxides. Is able to catalyze the glutathione dependent oxygenation of dichloroacetic acid to glyoxylic acid. The polypeptide is Maleylacetoacetate isomerase (Gstz1) (Rattus norvegicus (Rat)).